We begin with the raw amino-acid sequence, 316 residues long: Pseudouridine-5'-phosphate glycosidase (316 aa).

Glu-31 acts as the Proton donor in catalysis. The substrate site is built by Lys-92 and Val-112. Asp-144 provides a ligand contact to Mn(2+). Ser-146 to Asp-148 is a binding site for substrate. The active-site Nucleophile is the Lys-165.

This sequence belongs to the pseudouridine-5'-phosphate glycosidase family. Homotrimer. Mn(2+) is required as a cofactor.

It carries out the reaction D-ribose 5-phosphate + uracil = psi-UMP + H2O. In terms of biological role, catalyzes the reversible cleavage of pseudouridine 5'-phosphate (PsiMP) to ribose 5-phosphate and uracil. Functions biologically in the cleavage direction, as part of a pseudouridine degradation pathway. Part of an operon that could be involved in the biosynthesis of the blue pigment indigoidine, which is implicated in pathogenicity and protection from oxidative stress. The protein is Pseudouridine-5'-phosphate glycosidase of Dickeya dadantii (strain 3937) (Erwinia chrysanthemi (strain 3937)).